Reading from the N-terminus, the 374-residue chain is UDP-N-acetylglucosamine--N-acetylmuramyl-(pentapeptide) pyrophosphoryl-undecaprenol N-acetylglucosamine transferase (374 aa).

Residues 13–15 (TGG), N124, R165, S193, and Q294 contribute to the UDP-N-acetyl-alpha-D-glucosamine site.

This sequence belongs to the glycosyltransferase 28 family. MurG subfamily.

It is found in the cell inner membrane. The catalysed reaction is di-trans,octa-cis-undecaprenyl diphospho-N-acetyl-alpha-D-muramoyl-L-alanyl-D-glutamyl-meso-2,6-diaminopimeloyl-D-alanyl-D-alanine + UDP-N-acetyl-alpha-D-glucosamine = di-trans,octa-cis-undecaprenyl diphospho-[N-acetyl-alpha-D-glucosaminyl-(1-&gt;4)]-N-acetyl-alpha-D-muramoyl-L-alanyl-D-glutamyl-meso-2,6-diaminopimeloyl-D-alanyl-D-alanine + UDP + H(+). It functions in the pathway cell wall biogenesis; peptidoglycan biosynthesis. Cell wall formation. Catalyzes the transfer of a GlcNAc subunit on undecaprenyl-pyrophosphoryl-MurNAc-pentapeptide (lipid intermediate I) to form undecaprenyl-pyrophosphoryl-MurNAc-(pentapeptide)GlcNAc (lipid intermediate II). The chain is UDP-N-acetylglucosamine--N-acetylmuramyl-(pentapeptide) pyrophosphoryl-undecaprenol N-acetylglucosamine transferase from Rhizobium johnstonii (strain DSM 114642 / LMG 32736 / 3841) (Rhizobium leguminosarum bv. viciae).